Reading from the N-terminus, the 491-residue chain is Non-structural protein 1 (491 aa).

Positions 1-81 are RNA-binding; sequence MATFKDACYH…CFLDEEPHLL (81 aa). The interval 42 to 79 is zinc-binding domain; that stretch reads CLDCCQHTNLTYCRGCALYHVCQWCSQYNRCFLDEEPH. The interval 82-176 is important for cytoskeleton localization; the sequence is RMRTFKNVMT…ENQTPLQFIN (95 aa). Residues 320 to 491 are interaction with host IRF3; the sequence is NVHNCKWCQT…EYDLELSDVE (172 aa). The pLxIS motif motif lies at 485-488; it reads LELS.

The protein belongs to the rotavirus NSP1 family. As to quaternary structure, interacts (via C-terminus) with host IRF3; this interaction leads to IRF3 degradation. Interacts with host IRF7; this interaction leads to IRF7 degradation. Interacts with host CUL1 and CUL3.

The protein localises to the host cytoplasm. It is found in the host cytoskeleton. Its function is as follows. Plays a role in the inhibition of host innate immunity by inducing the degradation of key host factors required to activate interferon production such as IRF3, IRF5 or IRF7. Associates with components of cullin RING ligases (CRLs) including CUL1 or CUL3, which are essential multisubunit ubiquitination complexes, to modulate their activities. This chain is Non-structural protein 1, found in Rotavirus A (strain RVA/Human/Japan/AU-1/1982/G3P3[9]) (RV-A).